Consider the following 498-residue polypeptide: Glycerol kinase (498 aa).

T12 is an ADP binding site. ATP contacts are provided by T12, T13, and S14. A sn-glycerol 3-phosphate-binding site is contributed by T12. R16 is a binding site for ADP. Residues R82, E83, Y134, and D244 each contribute to the sn-glycerol 3-phosphate site. Glycerol contacts are provided by R82, E83, Y134, D244, and Q245. The ADP site is built by T266 and G310. The ATP site is built by T266, G310, Q314, and G411. G411 and N415 together coordinate ADP.

It belongs to the FGGY kinase family.

The enzyme catalyses glycerol + ATP = sn-glycerol 3-phosphate + ADP + H(+). It functions in the pathway polyol metabolism; glycerol degradation via glycerol kinase pathway; sn-glycerol 3-phosphate from glycerol: step 1/1. Inhibited by fructose 1,6-bisphosphate (FBP). In terms of biological role, key enzyme in the regulation of glycerol uptake and metabolism. Catalyzes the phosphorylation of glycerol to yield sn-glycerol 3-phosphate. This chain is Glycerol kinase, found in Azorhizobium caulinodans (strain ATCC 43989 / DSM 5975 / JCM 20966 / LMG 6465 / NBRC 14845 / NCIMB 13405 / ORS 571).